A 468-amino-acid polypeptide reads, in one-letter code: GDNF family receptor alpha-1 (468 aa).

Residues 1–24 (MFLATLYFALPLLDLLMSAEVSGG) form the signal peptide. 3 repeat units span residues 25-113 (DRLD…LQGN), 150-238 (KGNN…YEER), and 239-342 (ERPN…KNAI). C36 and C42 are oxidised to a cystine. N-linked (GlcNAc...) asparagine glycosylation occurs at N59. Cystine bridges form between C154–C214, C161–C167, C178–C192, C187–C233, C216–C221, C243–C313, C250–C256, C267–C285, C277–C337, and C315–C325. Residues N347 and N406 are each glycosylated (N-linked (GlcNAc...) asparagine). The GPI-anchor amidated serine moiety is linked to residue S430. Residues 431-468 (HITTKSMAAPPSCSLSSLPVLMLTALAALLSVSLAETS) constitute a propeptide, removed in mature form.

It belongs to the GDNFR family. Interacts with GDNF ligand and RET: forms a 2:2:2 ternary complex composed of GDNF ligand, GFRA1 and RET receptor. Interacts with SORL1, either alone or in complex with GDNF. Interaction between SORL1 and GFRA1 leads to GFRA1 internalization, but not degradation. Expressed in liver, brain, kidney and cochlea.

Its subcellular location is the cell membrane. The protein localises to the golgi apparatus. It is found in the trans-Golgi network. The protein resides in the endosome. It localises to the multivesicular body. Its function is as follows. Coreceptor for GDNF, a neurotrophic factor that enhances survival and morphological differentiation of dopaminergic neurons and increases their high-affinity dopamine uptake. GDNF-binding leads to autophosphorylation and activation of the RET receptor. In Rattus norvegicus (Rat), this protein is GDNF family receptor alpha-1 (Gfra1).